A 417-amino-acid chain; its full sequence is CinA-like protein (417 aa).

It belongs to the CinA family.

This is CinA-like protein from Gloeothece citriformis (strain PCC 7424) (Cyanothece sp. (strain PCC 7424)).